We begin with the raw amino-acid sequence, 132 residues long: Inactive D-aminoacyl-tRNA deacylase (132 aa).

Belongs to the DTD family.

In terms of biological role, a non-functional D-aminoacyl-tRNA deacylase. The protein is Inactive D-aminoacyl-tRNA deacylase of Bacillus subtilis (strain 168).